We begin with the raw amino-acid sequence, 78 residues long: Large ribosomal subunit protein bL31 (78 aa).

This sequence belongs to the bacterial ribosomal protein bL31 family. Type A subfamily. Part of the 50S ribosomal subunit.

Binds the 23S rRNA. The chain is Large ribosomal subunit protein bL31 (rpmE) from Rickettsia conorii (strain ATCC VR-613 / Malish 7).